Reading from the N-terminus, the 131-residue chain is Large-conductance mechanosensitive channel (131 aa).

2 helical membrane passes run 14 to 34 and 71 to 91; these read VMDM…VTSL and GNFI…FLLV.

The protein belongs to the MscL family. In terms of assembly, homopentamer.

The protein localises to the cell inner membrane. Its function is as follows. Channel that opens in response to stretch forces in the membrane lipid bilayer. May participate in the regulation of osmotic pressure changes within the cell. The polypeptide is Large-conductance mechanosensitive channel (Dinoroseobacter shibae (strain DSM 16493 / NCIMB 14021 / DFL 12)).